The primary structure comprises 343 residues: Methionine import ATP-binding protein MetN 2 (343 aa).

The ABC transporter domain maps to 2–241; sequence IEFKDVTKTF…PQQAVTKRFV (240 aa). 38-45 contacts ATP; the sequence is GYSGAGKS.

It belongs to the ABC transporter superfamily. Methionine importer (TC 3.A.1.24) family. As to quaternary structure, the complex is composed of two ATP-binding proteins (MetN), two transmembrane proteins (MetI) and a solute-binding protein (MetQ).

It is found in the cell membrane. It catalyses the reaction L-methionine(out) + ATP + H2O = L-methionine(in) + ADP + phosphate + H(+). It carries out the reaction D-methionine(out) + ATP + H2O = D-methionine(in) + ADP + phosphate + H(+). In terms of biological role, part of the ABC transporter complex MetNIQ involved in methionine import. Responsible for energy coupling to the transport system. The chain is Methionine import ATP-binding protein MetN 2 from Lactiplantibacillus plantarum (strain ATCC BAA-793 / NCIMB 8826 / WCFS1) (Lactobacillus plantarum).